We begin with the raw amino-acid sequence, 126 residues long: Fluoride-specific ion channel FluC (126 aa).

A run of 3 helical transmembrane segments spans residues 35–55 (WWTL…IGLL), 71–91 (VGML…WLLF), and 101–121 (LYVV…MILI). 2 residues coordinate Na(+): Gly-75 and Thr-78.

The protein belongs to the fluoride channel Fluc/FEX (TC 1.A.43) family.

It localises to the cell inner membrane. It carries out the reaction fluoride(in) = fluoride(out). Its activity is regulated as follows. Na(+) is not transported, but it plays an essential structural role and its presence is essential for fluoride channel function. Functionally, fluoride-specific ion channel. Important for reducing fluoride concentration in the cell, thus reducing its toxicity. This is Fluoride-specific ion channel FluC from Sphingopyxis alaskensis (strain DSM 13593 / LMG 18877 / RB2256) (Sphingomonas alaskensis).